The sequence spans 89 residues: Small ribosomal subunit protein uS15 (89 aa).

Belongs to the universal ribosomal protein uS15 family. Part of the 30S ribosomal subunit. Forms a bridge to the 50S subunit in the 70S ribosome, contacting the 23S rRNA.

Functionally, one of the primary rRNA binding proteins, it binds directly to 16S rRNA where it helps nucleate assembly of the platform of the 30S subunit by binding and bridging several RNA helices of the 16S rRNA. In terms of biological role, forms an intersubunit bridge (bridge B4) with the 23S rRNA of the 50S subunit in the ribosome. This Blochmanniella pennsylvanica (strain BPEN) protein is Small ribosomal subunit protein uS15.